We begin with the raw amino-acid sequence, 426 residues long: Lipid droplet localized protein (426 aa).

Residues 278 to 298 (FYGYLIGLWIMFLSIFVKYPF) traverse the membrane as a helical segment.

It belongs to the saccharopine dehydrogenase family.

Its subcellular location is the membrane. The protein resides in the lipid droplet. In Caenorhabditis elegans, this protein is Lipid droplet localized protein.